Here is a 146-residue protein sequence, read N- to C-terminus: MGTRSRRPQLLWLLLLCGTCARVCGCNETRMLERLPRCGKTFAERMREVAVWKWCDLSQFIVFYESFTNCTEEETVVVGCYWPNPLAQGFITGVHRQFFSNCTVDRTHWEDPPDEVLIPLIAVPILLTVAMTGLVVWRSKRTDQLP.

The N-terminal stretch at 1-21 is a signal peptide; the sequence is MGTRSRRPQLLWLLLLCGTCA. At 22 to 116 the chain is on the extracellular side; the sequence is RVCGCNETRM…THWEDPPDEV (95 aa). Asn-27, Asn-69, and Asn-101 each carry an N-linked (GlcNAc...) asparagine glycan. 2 cysteine pairs are disulfide-bonded: Cys-38/Cys-70 and Cys-55/Cys-102. A helical membrane pass occupies residues 117 to 136; the sequence is LIPLIAVPILLTVAMTGLVV. The Cytoplasmic portion of the chain corresponds to 137-146; the sequence is WRSKRTDQLP.

It belongs to the RAMP family. As to quaternary structure, heterodimer of CALCRL and RAMP3. Interacts with GPER1.

The protein localises to the cell membrane. It localises to the membrane. Plays a role in cardioprotection by reducing cardiac hypertrophy and perivascular fibrosis in a GPER1-dependent manner. Transports the calcitonin gene-related peptide type 1 receptor (CALCRL) and GPER1 to the plasma membrane. Acts as a receptor for adrenomedullin (AM) together with CALCRL. This chain is Receptor activity-modifying protein 3 (RAMP3), found in Cavia porcellus (Guinea pig).